We begin with the raw amino-acid sequence, 350 residues long: Biotin synthase (350 aa).

In terms of domain architecture, Radical SAM core spans 38 to 256 (NHVQVSTLLS…IAIARIMMPQ (219 aa)). [4Fe-4S] cluster-binding residues include cysteine 53, cysteine 57, and cysteine 60. 4 residues coordinate [2Fe-2S] cluster: cysteine 97, cysteine 128, cysteine 188, and arginine 260.

Belongs to the radical SAM superfamily. Biotin synthase family. Homodimer. [4Fe-4S] cluster serves as cofactor. [2Fe-2S] cluster is required as a cofactor.

The catalysed reaction is (4R,5S)-dethiobiotin + (sulfur carrier)-SH + 2 reduced [2Fe-2S]-[ferredoxin] + 2 S-adenosyl-L-methionine = (sulfur carrier)-H + biotin + 2 5'-deoxyadenosine + 2 L-methionine + 2 oxidized [2Fe-2S]-[ferredoxin]. It functions in the pathway cofactor biosynthesis; biotin biosynthesis; biotin from 7,8-diaminononanoate: step 2/2. In terms of biological role, catalyzes the conversion of dethiobiotin (DTB) to biotin by the insertion of a sulfur atom into dethiobiotin via a radical-based mechanism. The polypeptide is Biotin synthase (Vibrio parahaemolyticus serotype O3:K6 (strain RIMD 2210633)).